A 558-amino-acid polypeptide reads, in one-letter code: Proline--tRNA ligase (558 aa).

This sequence belongs to the class-II aminoacyl-tRNA synthetase family. ProS type 1 subfamily. As to quaternary structure, homodimer.

Its subcellular location is the cytoplasm. The catalysed reaction is tRNA(Pro) + L-proline + ATP = L-prolyl-tRNA(Pro) + AMP + diphosphate. Catalyzes the attachment of proline to tRNA(Pro) in a two-step reaction: proline is first activated by ATP to form Pro-AMP and then transferred to the acceptor end of tRNA(Pro). As ProRS can inadvertently accommodate and process non-cognate amino acids such as alanine and cysteine, to avoid such errors it has two additional distinct editing activities against alanine. One activity is designated as 'pretransfer' editing and involves the tRNA(Pro)-independent hydrolysis of activated Ala-AMP. The other activity is designated 'posttransfer' editing and involves deacylation of mischarged Ala-tRNA(Pro). The misacylated Cys-tRNA(Pro) is not edited by ProRS. The sequence is that of Proline--tRNA ligase from Coprothermobacter proteolyticus (strain ATCC 35245 / DSM 5265 / OCM 4 / BT).